A 198-amino-acid chain; its full sequence is Recombination protein RecR (198 aa).

A C4-type zinc finger spans residues 56–71; the sequence is CTECRDFSETKICAIC. The Toprim domain occupies 79 to 174; that stretch reads HQLCVVESPP…RPSRLAQGLP (96 aa).

It belongs to the RecR family.

Functionally, may play a role in DNA repair. It seems to be involved in an RecBC-independent recombinational process of DNA repair. It may act with RecF and RecO. This is Recombination protein RecR from Xylella fastidiosa (strain 9a5c).